Reading from the N-terminus, the 770-residue chain is tRNA(Met) cytidine acetyltransferase TmcA 2 (770 aa).

2 residues coordinate ATP: Q209 and R390. One can recognise an N-acetyltransferase domain in the interval 458–608 (MIMLDGIHHK…YPVVVIRPIS (151 aa)). 533 to 535 (IAV) contributes to the acetyl-CoA binding site.

Belongs to the TmcA family.

It localises to the cytoplasm. It carries out the reaction cytidine(34) in elongator tRNA(Met) + acetyl-CoA + ATP + H2O = N(4)-acetylcytidine(34) in elongator tRNA(Met) + ADP + phosphate + CoA + H(+). The catalysed reaction is a cytidine in RNA + acetyl-CoA + ATP + H2O = an N(4)-acetylcytidine in RNA + ADP + phosphate + CoA + H(+). It catalyses the reaction a cytidine in tRNA + acetyl-CoA + ATP + H2O = an N(4)-acetylcytidine in tRNA + ADP + phosphate + CoA + H(+). The enzyme catalyses a cytidine in mRNA + acetyl-CoA + ATP + H2O = an N(4)-acetylcytidine in mRNA + ADP + phosphate + CoA + H(+). Catalyzes the formation of N(4)-acetylcytidine (ac(4)C) at the wobble position of tRNA(Met), by using acetyl-CoA as an acetyl donor and ATP (or GTP). Its function is as follows. Catalyzes the formation of 41 N(4)-acetylcytidine (ac(4)C) sites in RNA, almost always on the middle C of a CCG motif. Modifications are found mostly in tRNA, with small amounts found in rRNA and mRNA. This is tRNA(Met) cytidine acetyltransferase TmcA 2 from Saccharolobus solfataricus (strain ATCC 35092 / DSM 1617 / JCM 11322 / P2) (Sulfolobus solfataricus).